Reading from the N-terminus, the 175-residue chain is Avenin-like a7 (175 aa).

The signal sequence occupies residues 1–19 (MKTMFILALLAFTATSAVA).

It belongs to the prolamin family. In terms of processing, contains 7 disulfide bonds.

Seed storage protein. Not integrated in the gluten polymer through disulfide bonds, unless incorporated by reduction and reoxidation during dough making. Increases dough strength and bread volume, but decreases dough stability when added into a base wheat flour. The sequence is that of Avenin-like a7 from Triticum aestivum (Wheat).